The primary structure comprises 547 residues: Chaperonin GroEL (547 aa).

Residues 30 to 33 (TLGP), Lys51, 87 to 91 (DGTTT), Gly415, 479 to 481 (NAA), and Asp495 each bind ATP.

It belongs to the chaperonin (HSP60) family. As to quaternary structure, forms a cylinder of 14 subunits composed of two heptameric rings stacked back-to-back. Interacts with the co-chaperonin GroES.

It localises to the cytoplasm. It catalyses the reaction ATP + H2O + a folded polypeptide = ADP + phosphate + an unfolded polypeptide.. Functionally, together with its co-chaperonin GroES, plays an essential role in assisting protein folding. The GroEL-GroES system forms a nano-cage that allows encapsulation of the non-native substrate proteins and provides a physical environment optimized to promote and accelerate protein folding. The polypeptide is Chaperonin GroEL (Enterobacter sp. (strain 638)).